Reading from the N-terminus, the 367-residue chain is MLTTTGTLTHQKIGDFYTEAGATLHDVTIAYQAWGHYTGTNLIVLEHALTGDSNAISWWDGLIGPGKALDTNRYCILCTNVLGGCKGSTGPSSPHPDGKPWGSRFPALSIRDLVNAEKQLFDHLGINKIHAIIGGSMGGARTLEWAALHPHMMTTGFVIAVSARASAWQIGIQTAQISAIELDPHWNGGDYYSGHAPWEGIAAARRIAHLTYRGELEIDERFGTSAQHGENPLGPFRDPHQRFAVTSYLQHQGIKLAQRFDAGSYVVLTEALNRHDIGRGRGGLNKALSAITVPIMIAGVDTDILYPYHQQEHLSRNLGNLLAMAKISSPVGHDAFLTEFRQMERILRHFMELSEGIDDSFRTKLER.

An AB hydrolase-1 domain is found at 41–339 (NLIVLEHALT…PVGHDAFLTE (299 aa)). The Nucleophile role is filled by serine 136. A substrate-binding site is contributed by arginine 205. Catalysis depends on residues aspartate 303 and histidine 333. Aspartate 334 provides a ligand contact to substrate.

It belongs to the AB hydrolase superfamily. MetX family. As to quaternary structure, homodimer.

Its subcellular location is the cytoplasm. The catalysed reaction is L-homoserine + acetyl-CoA = O-acetyl-L-homoserine + CoA. The protein operates within amino-acid biosynthesis; L-methionine biosynthesis via de novo pathway; O-acetyl-L-homoserine from L-homoserine: step 1/1. Functionally, transfers an acetyl group from acetyl-CoA to L-homoserine, forming acetyl-L-homoserine. In Corynebacterium diphtheriae (strain ATCC 700971 / NCTC 13129 / Biotype gravis), this protein is Homoserine O-acetyltransferase.